Here is a 60-residue protein sequence, read N- to C-terminus: Large ribosomal subunit protein uL30 (60 aa).

The protein belongs to the universal ribosomal protein uL30 family. Part of the 50S ribosomal subunit.

The protein is Large ribosomal subunit protein uL30 of Leuconostoc citreum (strain KM20).